A 923-amino-acid polypeptide reads, in one-letter code: Periodic tryptophan protein 2 (923 aa).

WD repeat units lie at residues 12 to 52, 53 to 93, 94 to 132, 144 to 183, and 189 to 228; these read GTVY…TFEY, EHRK…LHHF, NFKE…KDRQ, GHFQ…KNLA, and GHRD…SDDD. Residues serine 225 and serine 232 each carry the phosphoserine modification. 8 WD repeats span residues 258–297, 300–340, 343–382, 385–424, 428–470, 471–510, 513–552, and 575–614; these read ANQA…LIQQ, MGQN…YILK, GHFD…CLAT, EHTS…NFRT, TERI…DALS, GHEG…QQVE, EVYS…QVGN, and ERSK…LLKR. Phosphoserine occurs at positions 651 and 664. The interval 653–674 is disordered; it reads LEDRIDNSLPGSQRGGDLSTRK. The stretch at 676–714 is one WD 14 repeat; sequence RPEVRVTSVQFSPTANAFAAASTEGLLIYSTNDTILFDP. Acidic residues-rich tracts occupy residues 869–893 and 911–923; these read KDDA…DEEG and DSSD…KELP. Residues 869–923 are disordered; the sequence is KDDADEDNEENEENDVVMESDDEEGWIGFNGKDNKLPLSNENDSSDEEENEKELP. Serine 912 and serine 913 each carry phosphoserine.

The protein belongs to the WD repeat PWP2 family. In terms of assembly, interacts with snoRNA U3. Interacts with MPP10. Component of the ribosomal small subunit (SSU) processome composed of at least 40 protein subunits and snoRNA U3.

Its subcellular location is the nucleus. The protein resides in the nucleolus. Its function is as follows. Required for bud-site selection and cell separation. Also involved in nucleolar processing of pre-18S ribosomal RNA. The chain is Periodic tryptophan protein 2 (PWP2) from Saccharomyces cerevisiae (strain ATCC 204508 / S288c) (Baker's yeast).